Consider the following 320-residue polypeptide: Mitochondrial fission regulator 1-like-B (320 aa).

The interval 1 to 37 is disordered; the sequence is MASLGAAAEPERSLFGKDGAEACESPEGRRSGRRKRT. The segment covering 9-30 has biased composition (basic and acidic residues); sequence EPERSLFGKDGAEACESPEGRR.

This sequence belongs to the MTFR1 family.

Its subcellular location is the mitochondrion outer membrane. Functionally, mitochondrial protein required for adaptation of miochondrial dynamics to metabolic changes. Regulates mitochondrial morphology at steady state and mediates AMPK-dependent stress-induced mitochondrial fragmentation via the control of OPA1 levels. The polypeptide is Mitochondrial fission regulator 1-like-B (mtfr1l-b) (Xenopus laevis (African clawed frog)).